Reading from the N-terminus, the 122-residue chain is Urease subunit beta (122 aa).

The tract at residues 102–122 (DGGTAVAGEPRPGIAAERDHQ) is disordered.

This sequence belongs to the urease beta subunit family. As to quaternary structure, heterotrimer of UreA (gamma), UreB (beta) and UreC (alpha) subunits. Three heterotrimers associate to form the active enzyme.

Its subcellular location is the cytoplasm. The catalysed reaction is urea + 2 H2O + H(+) = hydrogencarbonate + 2 NH4(+). Its pathway is nitrogen metabolism; urea degradation; CO(2) and NH(3) from urea (urease route): step 1/1. The polypeptide is Urease subunit beta (Paenarthrobacter aurescens (strain TC1)).